A 211-amino-acid polypeptide reads, in one-letter code: Orotate phosphoribosyltransferase (211 aa).

5-phospho-alpha-D-ribose 1-diphosphate is bound by residues arginine 103, lysine 107, histidine 109, and 129–137; that span reads EDLISTGKS. Serine 133 is an orotate binding site.

It belongs to the purine/pyrimidine phosphoribosyltransferase family. PyrE subfamily. In terms of assembly, homodimer. It depends on Mg(2+) as a cofactor.

It carries out the reaction orotidine 5'-phosphate + diphosphate = orotate + 5-phospho-alpha-D-ribose 1-diphosphate. The protein operates within pyrimidine metabolism; UMP biosynthesis via de novo pathway; UMP from orotate: step 1/2. Catalyzes the transfer of a ribosyl phosphate group from 5-phosphoribose 1-diphosphate to orotate, leading to the formation of orotidine monophosphate (OMP). The protein is Orotate phosphoribosyltransferase of Fusobacterium nucleatum subsp. nucleatum (strain ATCC 25586 / DSM 15643 / BCRC 10681 / CIP 101130 / JCM 8532 / KCTC 2640 / LMG 13131 / VPI 4355).